Consider the following 427-residue polypeptide: MELNIKMDRSRELFEESRKYLVGGVNSPVRSFKPFPFFVKSAKDCFLYDEDGNEFIDYCLAYGPMVLGHANENILNAVKSQMDLGTAYGVPSEKEIILAKEVINRIPCAEMVRFVNSGTEATMGAIRLARGVTKRNKIIKFEGAFHGAHDYVLVKTGSGALTHGAPNSPGIPEDTTKNTLLIPFNDEDAVKKVISENKDEIACIILEPVMGNVGCILPKDGYLQFLREITEENGIILIFDEVITGFRLSKGGAQEYYGIKSDLATVGKILGGGFPIGAITGKKEYMEQFSPNGQIYQAGTFNGNPVSVTAGIETLKNLDDKFYKETTKKADILSSFLRETAEKYNVPAKVYNVASIFQIYFNDKEIVTYEDAKSSDTEKFMRYFYTLLENGVFIAPSQFECCFTSIKHNDEVLEKTMNAIDIAMKKL.

Lysine 268 carries the N6-(pyridoxal phosphate)lysine modification.

The protein belongs to the class-III pyridoxal-phosphate-dependent aminotransferase family. HemL subfamily. The cofactor is pyridoxal 5'-phosphate.

The protein localises to the cytoplasm. It catalyses the reaction (S)-4-amino-5-oxopentanoate = 5-aminolevulinate. The protein operates within porphyrin-containing compound metabolism; protoporphyrin-IX biosynthesis; 5-aminolevulinate from L-glutamyl-tRNA(Glu): step 2/2. This Methanococcus maripaludis (strain C7 / ATCC BAA-1331) protein is Glutamate-1-semialdehyde 2,1-aminomutase.